Reading from the N-terminus, the 132-residue chain is Small ribosomal subunit protein uS8 (132 aa).

It belongs to the universal ribosomal protein uS8 family. As to quaternary structure, part of the 30S ribosomal subunit. Contacts proteins S5 and S12.

One of the primary rRNA binding proteins, it binds directly to 16S rRNA central domain where it helps coordinate assembly of the platform of the 30S subunit. The polypeptide is Small ribosomal subunit protein uS8 (Geobacillus kaustophilus (strain HTA426)).